A 451-amino-acid polypeptide reads, in one-letter code: UDP-N-acetylmuramoylalanine--D-glutamate ligase (451 aa).

An ATP-binding site is contributed by 119–125 (GSNGKTT).

Belongs to the MurCDEF family.

It is found in the cytoplasm. It carries out the reaction UDP-N-acetyl-alpha-D-muramoyl-L-alanine + D-glutamate + ATP = UDP-N-acetyl-alpha-D-muramoyl-L-alanyl-D-glutamate + ADP + phosphate + H(+). Its pathway is cell wall biogenesis; peptidoglycan biosynthesis. Functionally, cell wall formation. Catalyzes the addition of glutamate to the nucleotide precursor UDP-N-acetylmuramoyl-L-alanine (UMA). This chain is UDP-N-acetylmuramoylalanine--D-glutamate ligase, found in Geobacillus sp. (strain WCH70).